A 436-amino-acid polypeptide reads, in one-letter code: Enolase (436 aa).

Gln-167 is a binding site for (2R)-2-phosphoglycerate. Glu-209 functions as the Proton donor in the catalytic mechanism. Positions 246, 291, and 318 each coordinate Mg(2+). 4 residues coordinate (2R)-2-phosphoglycerate: Lys-343, Arg-372, Ser-373, and Lys-394. Lys-343 serves as the catalytic Proton acceptor.

Belongs to the enolase family. As to quaternary structure, component of the RNA degradosome, a multiprotein complex involved in RNA processing and mRNA degradation. Requires Mg(2+) as cofactor.

The protein localises to the cytoplasm. It localises to the secreted. Its subcellular location is the cell surface. It catalyses the reaction (2R)-2-phosphoglycerate = phosphoenolpyruvate + H2O. It functions in the pathway carbohydrate degradation; glycolysis; pyruvate from D-glyceraldehyde 3-phosphate: step 4/5. Catalyzes the reversible conversion of 2-phosphoglycerate (2-PG) into phosphoenolpyruvate (PEP). It is essential for the degradation of carbohydrates via glycolysis. The protein is Enolase of Haemophilus influenzae (strain 86-028NP).